The primary structure comprises 207 residues: Ribosomal RNA small subunit methyltransferase G (207 aa).

S-adenosyl-L-methionine is bound by residues glycine 71, phenylalanine 76, alanine 122–glutamate 123, and arginine 135.

The protein belongs to the methyltransferase superfamily. RNA methyltransferase RsmG family.

It localises to the cytoplasm. Specifically methylates the N7 position of a guanine in 16S rRNA. The chain is Ribosomal RNA small subunit methyltransferase G from Cytophaga hutchinsonii (strain ATCC 33406 / DSM 1761 / CIP 103989 / NBRC 15051 / NCIMB 9469 / D465).